Consider the following 356-residue polypeptide: 3-dehydroquinate synthase (356 aa).

Residues 69-74, 103-107, 127-128, K140, K149, and 167-170 each bind NAD(+); these read DGEKFK, GVIGD, TT, and CLKT. Zn(2+) is bound by residues E182, H245, and H262.

This sequence belongs to the sugar phosphate cyclases superfamily. Dehydroquinate synthase family. Co(2+) is required as a cofactor. It depends on Zn(2+) as a cofactor. Requires NAD(+) as cofactor.

It is found in the cytoplasm. The catalysed reaction is 7-phospho-2-dehydro-3-deoxy-D-arabino-heptonate = 3-dehydroquinate + phosphate. Its pathway is metabolic intermediate biosynthesis; chorismate biosynthesis; chorismate from D-erythrose 4-phosphate and phosphoenolpyruvate: step 2/7. In terms of biological role, catalyzes the conversion of 3-deoxy-D-arabino-heptulosonate 7-phosphate (DAHP) to dehydroquinate (DHQ). This chain is 3-dehydroquinate synthase, found in Psychromonas ingrahamii (strain DSM 17664 / CCUG 51855 / 37).